We begin with the raw amino-acid sequence, 652 residues long: Cleavage and polyadenylation specificity factor subunit 6 (652 aa).

Residues 20–85 (QAQDEFGGDG…GVYHQSSGSL (66 aa)) are disordered. The 81-residue stretch at 93–173 (YQLYVGNLTW…QAPVVTYPSK (81 aa)) folds into the RRM domain. 2 disordered regions span residues 184–440 (KTRP…QQMG) and 518–652 (SYNR…RSRH). Pro residues predominate over residues 187-203 (PVPPPQQNGPPRGPAPP). The segment covering 205–223 (MGGGPMPTGHPGGPQGGGP) has biased composition (gly residues). Composition is skewed to pro residues over residues 256–266 (SGPPRMQPPMH), 295–307 (GPRP…PPQR), and 338–352 (PQGP…PGPG). Low complexity predominate over residues 391-406 (PGMNMPPQQGMNMTPQ). Pro residues predominate over residues 420–435 (GPWPPPQGKPPGPFPD). Over residues 518-528 (SYNRRERSRSR) the composition is skewed to basic and acidic residues. The segment covering 529-538 (ERSHRSRQRR) has biased composition (basic residues). A compositionally biased stretch (basic and acidic residues) spans 539–590 (ERSTSRYRERSRERERDRDRERERDGGSYRERSRSRERERQAPDHYRDDSRS). At S596 the chain carries Phosphoserine. The span at 598–610 (EPVVAEAAEAPSS) shows a compositional bias: low complexity. A compositionally biased stretch (basic and acidic residues) spans 612-652 (RYYEDRERYRSSDRERRDRDRDRDRERERDRDRREEHRSRH).

The protein belongs to the RRM CPSF6/7 family.

Its subcellular location is the nucleus. Functionally, may play a role in pre-mRNA 3'-processing. This is Cleavage and polyadenylation specificity factor subunit 6 from Drosophila melanogaster (Fruit fly).